We begin with the raw amino-acid sequence, 603 residues long: Aspartate--tRNA(Asp/Asn) ligase (603 aa).

Glu-187 provides a ligand contact to L-aspartate. Positions 211-214 (QQFK) are aspartate. Residues Arg-233 and His-461 each coordinate L-aspartate. 233-235 (RDE) is a binding site for ATP. Position 495 (Glu-495) interacts with ATP. Arg-502 serves as a coordination point for L-aspartate. 547–550 (GLDR) contributes to the ATP binding site.

The protein belongs to the class-II aminoacyl-tRNA synthetase family. Type 1 subfamily. In terms of assembly, homodimer.

It localises to the cytoplasm. It carries out the reaction tRNA(Asx) + L-aspartate + ATP = L-aspartyl-tRNA(Asx) + AMP + diphosphate. Its function is as follows. Aspartyl-tRNA synthetase with relaxed tRNA specificity since it is able to aspartylate not only its cognate tRNA(Asp) but also tRNA(Asn). Reaction proceeds in two steps: L-aspartate is first activated by ATP to form Asp-AMP and then transferred to the acceptor end of tRNA(Asp/Asn). The protein is Aspartate--tRNA(Asp/Asn) ligase of Chlorobaculum parvum (strain DSM 263 / NCIMB 8327) (Chlorobium vibrioforme subsp. thiosulfatophilum).